Here is a 315-residue protein sequence, read N- to C-terminus: Biotin synthase (315 aa).

The Radical SAM core domain maps to 39-266; that stretch reads NSLQFATLLS…KSAIRLTAGR (228 aa). Positions 54, 58, and 61 each coordinate [4Fe-4S] cluster. Residues C98, C129, C189, and R261 each coordinate [2Fe-2S] cluster.

It belongs to the radical SAM superfamily. Biotin synthase family. As to quaternary structure, homodimer. The cofactor is [4Fe-4S] cluster. It depends on [2Fe-2S] cluster as a cofactor.

It carries out the reaction (4R,5S)-dethiobiotin + (sulfur carrier)-SH + 2 reduced [2Fe-2S]-[ferredoxin] + 2 S-adenosyl-L-methionine = (sulfur carrier)-H + biotin + 2 5'-deoxyadenosine + 2 L-methionine + 2 oxidized [2Fe-2S]-[ferredoxin]. The protein operates within cofactor biosynthesis; biotin biosynthesis; biotin from 7,8-diaminononanoate: step 2/2. Catalyzes the conversion of dethiobiotin (DTB) to biotin by the insertion of a sulfur atom into dethiobiotin via a radical-based mechanism. The protein is Biotin synthase of Legionella pneumophila (strain Corby).